The following is a 262-amino-acid chain: Granzyme A (262 aa).

The N-terminal stretch at 1–26 (MRNSYRFLASSLSVVVSLLLIPEDVC) is a signal peptide. The propeptide at 27-28 (EK) is activation peptide. Residues 29–259 (IIGGNEVTPH…HLNWIIMTIK (231 aa)) form the Peptidase S1 domain. A disulfide bridge connects residues C54 and C70. Active-site charge relay system residues include H69 and D114. Cystine bridges form between C148/C218, C179/C197, and C208/C234. A glycan (N-linked (GlcNAc...) asparagine) is linked at N170. The active-site Charge relay system is the S212.

The protein belongs to the peptidase S1 family. Granzyme subfamily. Homodimer; disulfide-linked. Interacts with APEX1.

It is found in the secreted. The protein localises to the cytoplasmic granule. The catalysed reaction is Hydrolysis of proteins, including fibronectin, type IV collagen and nucleolin. Preferential cleavage: -Arg-|-Xaa-, -Lys-|-Xaa- &gt;&gt; -Phe-|-Xaa- in small molecule substrates.. Its function is as follows. Abundant protease in the cytosolic granules of cytotoxic T-cells and NK-cells which activates caspase-independent pyroptosis when delivered into the target cell through the immunological synapse. It cleaves after Lys or Arg. Once delivered into the target cell, acts by catalyzing cleavage of gasdermin-B (GSDMB), releasing the pore-forming moiety of GSDMB, thereby triggering pyroptosis and target cell death. Cleaves APEX1 after 'Lys-31' and destroys its oxidative repair activity. Cleaves the nucleosome assembly protein SET after 'Lys-189', which disrupts its nucleosome assembly activity and allows the SET complex to translocate into the nucleus to nick and degrade the DNA. This Homo sapiens (Human) protein is Granzyme A.